The primary structure comprises 84 residues: Beta-mammal/insect toxin Ts1 (84 aa).

A signal peptide spans 1 to 20; sequence MKGMILFISCLLLIGIVVEC. Residues 21–82 enclose the LCN-type CS-alpha/beta domain; sequence KEGYLMDHEG…VWDRATNKCG (62 aa). 4 disulfides stabilise this stretch: Cys31/Cys81, Cys35/Cys57, Cys43/Cys62, and Cys47/Cys64. Position 81 is a cysteine amide (Cys81).

It belongs to the long (4 C-C) scorpion toxin superfamily. Sodium channel inhibitor family. Post-translationally, C-terminal amidation is important for high activity. In terms of tissue distribution, expressed by the venom gland.

It is found in the secreted. Its function is as follows. Voltage-gated sodium channels (Nav) gating-modifier. Acts both as alpha- and beta-toxin, since it affects not only activation but also inactivation of Nav channels. Binds to Nav domain DII and impairs the four Nav channel voltage sensors movements. Depending on Nav channel subtypes tested, can also bind Nav domains DIII (low affinity) and DIV (very low affinity). Acts on almost all the Nav channels tested (mammalian Nav1.2/SCN2A, Nav1.3/SCN3A, Nav1.4/SCN4A, Nav1.5/SCN5A, Nav1.6/SCN8A, Nav1.9/SCN11A, and insect DmNav1). Is highly active against both mammals and insects. Irreversibly modulates DmNav channels. Other Ts1 activities have been studied, such as immunomodulation, antimicrobial activity or exocrine secretion. This toxin exhibits an antifungal activity against filamentous fungi. In vitro, it has an important immunomodulatory effect on macrophages by stimulating the release of pro-inflammatory cytokines. It also shows an activity in exocrine secretion in pancreas, stomach and adrenal gland. The polypeptide is Beta-mammal/insect toxin Ts1 (Tityus serrulatus (Brazilian scorpion)).